Reading from the N-terminus, the 729-residue chain is Catalase-peroxidase (729 aa).

Residues 1–33 (MSAHNTNESAVGKCPFHEQKEEKSVLARGAGGG) are disordered. Residues 15–25 (PFHEQKEEKSV) show a composition bias toward basic and acidic residues. Positions 108 to 229 (WHSAGTYRTV…LGATEMGLIY (122 aa)) form a cross-link, tryptophyl-tyrosyl-methioninium (Trp-Tyr) (with M-255). Histidine 109 acts as the Proton acceptor in catalysis. Residues 229–255 (YVNPEGPEASGNPASAAPAIRATFGNM) constitute a cross-link (tryptophyl-tyrosyl-methioninium (Tyr-Met) (with W-108)). Histidine 270 provides a ligand contact to heme b.

Belongs to the peroxidase family. Peroxidase/catalase subfamily. In terms of assembly, homodimer or homotetramer. Heme b is required as a cofactor. In terms of processing, formation of the three residue Trp-Tyr-Met cross-link is important for the catalase, but not the peroxidase activity of the enzyme.

It catalyses the reaction H2O2 + AH2 = A + 2 H2O. It carries out the reaction 2 H2O2 = O2 + 2 H2O. Bifunctional enzyme with both catalase and broad-spectrum peroxidase activity. This is Catalase-peroxidase from Erwinia tasmaniensis (strain DSM 17950 / CFBP 7177 / CIP 109463 / NCPPB 4357 / Et1/99).